A 394-amino-acid polypeptide reads, in one-letter code: Elongation factor Tu (394 aa).

The tr-type G domain maps to 10-204; the sequence is KPHVNVGTIG…AVDSYIPQPE (195 aa). The tract at residues 19-26 is G1; sequence GHVDHGKT. 19 to 26 serves as a coordination point for GTP; sequence GHVDHGKT. Thr26 is a binding site for Mg(2+). Positions 60-64 are G2; it reads GITIS. The tract at residues 81–84 is G3; the sequence is DCPG. Residues 81–85 and 136–139 each bind GTP; these read DCPGH and NKCD. The tract at residues 136–139 is G4; that stretch reads NKCD. Residues 174-176 form a G5 region; it reads SAV.

Belongs to the TRAFAC class translation factor GTPase superfamily. Classic translation factor GTPase family. EF-Tu/EF-1A subfamily. In terms of assembly, monomer.

The protein localises to the cytoplasm. It catalyses the reaction GTP + H2O = GDP + phosphate + H(+). Functionally, GTP hydrolase that promotes the GTP-dependent binding of aminoacyl-tRNA to the A-site of ribosomes during protein biosynthesis. This chain is Elongation factor Tu, found in Akkermansia muciniphila (strain ATCC BAA-835 / DSM 22959 / JCM 33894 / BCRC 81048 / CCUG 64013 / CIP 107961 / Muc).